The following is an 889-amino-acid chain: Exocyst complex component 1 (889 aa).

Residues Ser-145 and Ser-148 each carry the phosphoserine modification. The stretch at 156–269 (RAVQKTQHMD…GHVKETMEKI (114 aa)) forms a coiled coil. Ser-456 is subject to Phosphoserine.

It belongs to the SEC3 family. In terms of assembly, the exocyst complex is composed of Sec3/Exoc1, Sec5/Exoc2, Sec6/Exoc3, Sec8/Exoc4, Sec10/Exoc5, Sec15/Exoc6, Exo70/Exoc7 and Exo84/Exoc8.

In terms of biological role, component of the exocyst complex involved in the docking of exocytic vesicles with fusion sites on the plasma membrane. This chain is Exocyst complex component 1, found in Drosophila melanogaster (Fruit fly).